The primary structure comprises 244 residues: Mediator of RNA polymerase II transcription subunit 9 (244 aa).

Residues 1–10 show a composition bias toward gly residues; that stretch reads MDQFSGGGGN. Disordered stretches follow at residues 1–28 and 96–131; these read MDQF…TPTN and QQRL…HTPQ. Positions 13-28 are enriched in polar residues; that stretch reads MIPNVQAQGNFGTPTN. 2 stretches are compositionally biased toward low complexity: residues 96–111 and 122–131; these read QQRL…QSLQ and TPQSMMHTPQ. Residues 212-239 are a coiled coil; it reads KRNVEESEQLLQQRRDLIVEYRKSIEEI.

Belongs to the plant Mediator complex subunit 9 family. As to quaternary structure, component of the Mediator complex. Interacts with MEE14/CBP1.

The protein localises to the nucleus. Functionally, component of the Mediator complex, a coactivator involved in the regulated transcription of nearly all RNA polymerase II-dependent genes. Mediator functions as a bridge to convey information from gene-specific regulatory proteins to the basal RNA polymerase II transcription machinery. The Mediator complex, having a compact conformation in its free form, is recruited to promoters by direct interactions with regulatory proteins and serves for the assembly of a functional pre-initiation complex with RNA polymerase II and the general transcription factors. The polypeptide is Mediator of RNA polymerase II transcription subunit 9 (MED9) (Arabidopsis thaliana (Mouse-ear cress)).